The following is a 261-amino-acid chain: Claudin-18 (261 aa).

The Cytoplasmic portion of the chain corresponds to 1–6 (MSTTRC). Residues 7 to 27 (QVVGFLLSILGLAGCIVATEM) form a helical membrane-spanning segment. Residues 28–80 (DMWSTQDLYDNPVTAVFQYEGLWRSCVQQSSGFTECRPYLTILGLPAMLQAVR) lie on the Extracellular side of the membrane. A helical transmembrane segment spans residues 81 to 101 (ALMIVGIVLSVIGLLVAIFAL). Residues 102-122 (KCIRMGNMDDSAKAKMTLTSG) lie on the Cytoplasmic side of the membrane. The helical transmembrane segment at 123 to 143 (IMFIIAGLCAIAGVSVFANML) threads the bilayer. Residues 144-174 (VTNFWMSTASMFTSMGGMVQTVQTRYTFGAA) are Extracellular-facing. A helical transmembrane segment spans residues 175–195 (LFVGWVAGGLTLIGGVLMCIA). The interval 195–261 (ACRGLAPEET…QSPPSKYDYV (67 aa)) is required for role in regulation of RANKL-induced osteoclast differentiation. Topologically, residues 196–261 (CRGLAPEETN…QSPPSKYDYV (66 aa)) are cytoplasmic. Position 214 is a phosphoserine (Ser214). A disordered region spans residues 228-261 (SSGFESNTRNKKIYDGGARTEDEGQSPPSKYDYV). The segment covering 239 to 249 (KIYDGGARTED) has biased composition (basic and acidic residues).

Belongs to the claudin family. In terms of assembly, interacts with TJP2/ZO-2. Interacts with TJP1/ZO-1. Interacts with YAP1 (phosphorylated); the interaction sequesters YAP1 away from the nucleus and thereby restricts transcription of YAP1 target genes. Interacts with CLDN19.

Its subcellular location is the cell junction. It is found in the tight junction. It localises to the cell membrane. In terms of biological role, involved in alveolar fluid homeostasis via regulation of alveolar epithelial tight junction composition and therefore ion transport and solute permeability, potentially via downstream regulation of the actin cytoskeleton organization and beta-2-adrenergic signaling. Required for lung alveolarization and maintenance of the paracellular alveolar epithelial barrier. Acts to maintain epithelial progenitor cell proliferation and organ size, via regulation of YAP1 localization away from the nucleus and thereby restriction of YAP1 target gene transcription. Acts as a negative regulator of RANKL-induced osteoclast differentiation, potentially via relocation of TJP2/ZO-2 away from the nucleus, subsequently involved in bone resorption in response to calcium deficiency. Mediates the osteoprotective effects of estrogen, potentially via acting downstream of estrogen signaling independently of RANKL signaling pathways. In Bos taurus (Bovine), this protein is Claudin-18 (CLDN18).